We begin with the raw amino-acid sequence, 359 residues long: Guanine nucleotide-binding protein G(q) subunit alpha (359 aa).

Residues cysteine 9 and cysteine 10 are each lipidated (S-palmitoyl cysteine). Residues 38-359 (RELKLLLLGT…QLNLKEYNLV (322 aa)) form the G-alpha domain. The G1 motif stretch occupies residues 41–54 (KLLLLGTGESGKST). GTP-binding residues include serine 50, glycine 51, lysine 52, serine 53, threonine 54, serine 156, leucine 180, arginine 181, and arginine 183. Position 53 (serine 53) interacts with Mg(2+). The interval 178-186 (DVLRVRVPT) is G2 motif. Threonine 186 lines the Mg(2+) pocket. Residues 201–210 (FRMVDVGGQR) are G3 motif. Glutamine 209 carries the post-translational modification 5-glutamyl histamine. The interval 270 to 277 (ILFLNKKD) is G4 motif. Residues asparagine 274, lysine 275, aspartate 277, and alanine 331 each coordinate GTP. Residues 329 to 334 (TCATDT) form a G5 motif region.

This sequence belongs to the G-alpha family. G(q) subfamily. In terms of assembly, g proteins are composed of 3 units; alpha, beta and gamma. The alpha chain contains the guanine nucleotide binding site. Interacts (GDP-bound form) with RIC8A (via C-terminus); promoting GNAQ folding and association with the plasma membrane. Binds NHERF1. Forms a complex with PECAM1 and BDKRB2. Interacts with GAS2L2. In terms of processing, palmitoylated by ZDHHC3 and ZDHHC7. Palmitoylation occurs in the Golgi and participates in the localization of GNAQ to the plasma membrane. Histaminylated at Gln-209 residues by TGM2.

It localises to the cell membrane. It is found in the golgi apparatus. The protein localises to the nucleus. The protein resides in the nucleus membrane. It catalyses the reaction GTP + H2O = GDP + phosphate + H(+). Its function is as follows. Guanine nucleotide-binding proteins (G proteins) function as transducers downstream of G protein-coupled receptors (GPCRs) in numerous signaling cascades. The alpha chain contains the guanine nucleotide binding site and alternates between an active, GTP-bound state and an inactive, GDP-bound state. Signaling by an activated GPCR promotes GDP release and GTP binding. The alpha subunit has a low GTPase activity that converts bound GTP to GDP, thereby terminating the signal. Both GDP release and GTP hydrolysis are modulated by numerous regulatory proteins. Signaling is mediated via phospholipase C-beta-dependent inositol lipid hydrolysis for signal propagation: activates phospholipase C-beta: following GPCR activation, GNAQ activates PLC-beta (PLCB1, PLCB2, PLCB3 or PLCB4), leading to production of diacylglycerol (DAG) and inositol 1,4,5-trisphosphate (IP3). Required for platelet activation. Regulates B-cell selection and survival and is required to prevent B-cell-dependent autoimmunity. Regulates chemotaxis of BM-derived neutrophils and dendritic cells (in vitro). Transduces FFAR4 signaling in response to long-chain fatty acids (LCFAs). Together with GNA11, required for heart development. The protein is Guanine nucleotide-binding protein G(q) subunit alpha (Gnaq) of Mus musculus (Mouse).